The chain runs to 103 residues: 11.2 kDa protein (103 aa).

The polypeptide is 11.2 kDa protein (Pseudomonas phage Pf1 (Bacteriophage Pf1)).